We begin with the raw amino-acid sequence, 91 residues long: DNA-directed RNA polymerase subunit omega (91 aa).

Belongs to the RNA polymerase subunit omega family. In terms of assembly, the RNAP catalytic core consists of 2 alpha, 1 beta, 1 beta' and 1 omega subunit. When a sigma factor is associated with the core the holoenzyme is formed, which can initiate transcription.

The catalysed reaction is RNA(n) + a ribonucleoside 5'-triphosphate = RNA(n+1) + diphosphate. Its function is as follows. Promotes RNA polymerase assembly. Latches the N- and C-terminal regions of the beta' subunit thereby facilitating its interaction with the beta and alpha subunits. The chain is DNA-directed RNA polymerase subunit omega from Syntrophus aciditrophicus (strain SB).